The following is a 262-amino-acid chain: 4-hydroxy-2-oxo-heptane-1,7-dioate aldolase (262 aa).

The active-site Proton acceptor is H45. Q147 is a substrate binding site. E149 lines the a divalent metal cation pocket. Substrate-binding residues include A174 and D175. Position 175 (D175) interacts with a divalent metal cation.

This sequence belongs to the HpcH/HpaI aldolase family. In terms of assembly, homohexamer; trimer of dimers. A divalent metal cation serves as cofactor.

It carries out the reaction 4-hydroxy-2-oxoheptanedioate = succinate semialdehyde + pyruvate. It functions in the pathway aromatic compound metabolism; 4-hydroxyphenylacetate degradation; pyruvate and succinate semialdehyde from 4-hydroxyphenylacetate: step 7/7. Its function is as follows. Catalyzes the reversible retro-aldol cleavage of 4-hydroxy-2-ketoheptane-1,7-dioate (HKHD) to pyruvate and succinic semialdehyde. This chain is 4-hydroxy-2-oxo-heptane-1,7-dioate aldolase, found in Shigella sonnei (strain Ss046).